The primary structure comprises 145 residues: Transcription antitermination protein NusB (145 aa).

This sequence belongs to the NusB family.

Functionally, involved in transcription antitermination. Required for transcription of ribosomal RNA (rRNA) genes. Binds specifically to the boxA antiterminator sequence of the ribosomal RNA (rrn) operons. The polypeptide is Transcription antitermination protein NusB (Burkholderia lata (strain ATCC 17760 / DSM 23089 / LMG 22485 / NCIMB 9086 / R18194 / 383)).